Here is a 593-residue protein sequence, read N- to C-terminus: Auxin response factor 12 (593 aa).

Residues F126–R228 constitute a DNA-binding region (TF-B3). In terms of domain architecture, PB1 spans R511–R592.

Belongs to the ARF family. Homodimers and heterodimers.

It is found in the nucleus. Its function is as follows. Auxin response factors (ARFs) are transcriptional factors that bind specifically to the DNA sequence 5'-TGTCTC-3' found in the auxin-responsive promoter elements (AuxREs). Could act as transcriptional activator or repressor. Formation of heterodimers with Aux/IAA proteins may alter their ability to modulate early auxin response genes expression. In Arabidopsis thaliana (Mouse-ear cress), this protein is Auxin response factor 12 (ARF12).